The following is a 398-amino-acid chain: Cytochrome P450 165B3 (398 aa).

Cysteine 347 provides a ligand contact to heme.

It belongs to the cytochrome P450 family. The cofactor is heme.

The protein operates within antibiotic biosynthesis; vancomycin biosynthesis. Functionally, involved in the coupling of aromatic side chains of the heptapeptide of vancomycin. The chain is Cytochrome P450 165B3 (cyp165B3) from Amycolatopsis orientalis (Nocardia orientalis).